The chain runs to 302 residues: Vacuolar protein sorting-associated protein 26A (302 aa).

It belongs to the VPS26 family. As to quaternary structure, component of the retromer complex which consists of VPS29 (MAG1), VPS26 (VPS26A or VPS26B), VPS35 (VPS35A or VPS35B or VPS35C), VPS5/17 (SNX1 or SNX2A or SNX2B). Component of a retromer subcomplex consisting of VPS29 (MAG1), VPS26 (VPS26A or VPS26B), VPS35 (VPS35A or VPS35B or VPS35C).

Its subcellular location is the cytoplasm. The protein resides in the endosome membrane. It localises to the prevacuolar compartment membrane. It is found in the golgi apparatus. The protein localises to the trans-Golgi network membrane. Its function is as follows. Plays a role in vesicular protein sorting. Component of the membrane-associated retromer complex which is essential in endosome-to-Golgi retrograde transport. The VPS29-VPS26-VPS35 subcomplex may be involved in recycling of specific cargos from endosome to the plasma membrane. The protein is Vacuolar protein sorting-associated protein 26A (VPS26A) of Arabidopsis thaliana (Mouse-ear cress).